The chain runs to 268 residues: Ribosomal RNA small subunit methyltransferase A (268 aa).

Positions 17, 19, 44, 65, 89, and 110 each coordinate S-adenosyl-L-methionine.

This sequence belongs to the class I-like SAM-binding methyltransferase superfamily. rRNA adenine N(6)-methyltransferase family. RsmA subfamily.

The protein localises to the cytoplasm. It carries out the reaction adenosine(1518)/adenosine(1519) in 16S rRNA + 4 S-adenosyl-L-methionine = N(6)-dimethyladenosine(1518)/N(6)-dimethyladenosine(1519) in 16S rRNA + 4 S-adenosyl-L-homocysteine + 4 H(+). In terms of biological role, specifically dimethylates two adjacent adenosines (A1518 and A1519) in the loop of a conserved hairpin near the 3'-end of 16S rRNA in the 30S particle. May play a critical role in biogenesis of 30S subunits. The protein is Ribosomal RNA small subunit methyltransferase A of Acidithiobacillus ferrooxidans (strain ATCC 53993 / BNL-5-31) (Leptospirillum ferrooxidans (ATCC 53993)).